Reading from the N-terminus, the 50-residue chain is Small ribosomal subunit protein uS14 (50 aa).

Residues cysteine 15, cysteine 18, cysteine 33, and cysteine 36 each contribute to the Zn(2+) site.

It belongs to the universal ribosomal protein uS14 family. Zinc-binding uS14 subfamily. As to quaternary structure, part of the 30S ribosomal subunit. Zn(2+) is required as a cofactor.

Functionally, binds 16S rRNA, required for the assembly of 30S particles. The polypeptide is Small ribosomal subunit protein uS14 (Methanosarcina acetivorans (strain ATCC 35395 / DSM 2834 / JCM 12185 / C2A)).